The chain runs to 501 residues: HMG-box protein STE11 (501 aa).

The segment covering 142–153 has biased composition (polar residues); that stretch reads PVNMVGSLSGSP. 2 disordered regions span residues 142–205 and 246–293; these read PVNM…KRPL and YAEM…SLEQ. Positions 192–204 are enriched in low complexity; that stretch reads SRSGSSSSGIKRP. The HMG box DNA-binding region spans 201 to 265; that stretch reads IKRPLNSFML…RHAKEYPDYK (65 aa). Residues 246 to 263 are compositionally biased toward basic and acidic residues; sequence YAEMAQRERERHAKEYPD.

Post-translationally, phosphorylated by MAPK2.

It is found in the nucleus. The protein is HMG-box protein STE11 of Pneumocystis carinii.